The chain runs to 494 residues: UPF0371 protein SP70585_0405 (494 aa).

The protein belongs to the UPF0371 family.

The polypeptide is UPF0371 protein SP70585_0405 (Streptococcus pneumoniae (strain 70585)).